A 383-amino-acid chain; its full sequence is Lipoyl synthase, mitochondrial (383 aa).

Residues 25 to 34 (STPSLLQTLD) show a composition bias toward polar residues. Positions 25–44 (STPSLLQTLDPSVPSPPAAG) are disordered. Residues C110, C115, C121, C141, C145, C148, and S357 each coordinate [4Fe-4S] cluster. Residues 126–346 (ETGTATATIM…RALGVEMGFR (221 aa)) form the Radical SAM core domain.

It belongs to the radical SAM superfamily. Lipoyl synthase family. [4Fe-4S] cluster serves as cofactor.

The protein localises to the mitochondrion. It carries out the reaction [[Fe-S] cluster scaffold protein carrying a second [4Fe-4S](2+) cluster] + N(6)-octanoyl-L-lysyl-[protein] + 2 oxidized [2Fe-2S]-[ferredoxin] + 2 S-adenosyl-L-methionine + 4 H(+) = [[Fe-S] cluster scaffold protein] + N(6)-[(R)-dihydrolipoyl]-L-lysyl-[protein] + 4 Fe(3+) + 2 hydrogen sulfide + 2 5'-deoxyadenosine + 2 L-methionine + 2 reduced [2Fe-2S]-[ferredoxin]. The protein operates within protein modification; protein lipoylation via endogenous pathway; protein N(6)-(lipoyl)lysine from octanoyl-[acyl-carrier-protein]: step 2/2. In terms of biological role, catalyzes the radical-mediated insertion of two sulfur atoms into the C-6 and C-8 positions of the octanoyl moiety bound to the lipoyl domains of lipoate-dependent enzymes, thereby converting the octanoylated domains into lipoylated derivatives. This Zea mays (Maize) protein is Lipoyl synthase, mitochondrial.